Consider the following 459-residue polypeptide: Pup--protein ligase (459 aa).

Glu-9 serves as a coordination point for Mg(2+). ATP is bound at residue Arg-54. A Mg(2+)-binding site is contributed by Tyr-56. Catalysis depends on Asp-58, which acts as the Proton acceptor. Glu-64 serves as a coordination point for Mg(2+). The ATP site is built by Thr-67 and Trp-421.

This sequence belongs to the Pup ligase/Pup deamidase family. Pup-conjugating enzyme subfamily.

It carries out the reaction ATP + [prokaryotic ubiquitin-like protein]-L-glutamate + [protein]-L-lysine = ADP + phosphate + N(6)-([prokaryotic ubiquitin-like protein]-gamma-L-glutamyl)-[protein]-L-lysine.. The protein operates within protein degradation; proteasomal Pup-dependent pathway. It functions in the pathway protein modification; protein pupylation. Catalyzes the covalent attachment of the prokaryotic ubiquitin-like protein modifier Pup to the proteasomal substrate proteins, thereby targeting them for proteasomal degradation. This tagging system is termed pupylation. The ligation reaction involves the side-chain carboxylate of the C-terminal glutamate of Pup and the side-chain amino group of a substrate lysine. This is Pup--protein ligase from Jonesia denitrificans (strain ATCC 14870 / DSM 20603 / BCRC 15368 / CIP 55.134 / JCM 11481 / NBRC 15587 / NCTC 10816 / Prevot 55134) (Listeria denitrificans).